Reading from the N-terminus, the 107-residue chain is U1-lycotoxin-Ls1h (107 aa).

The signal sequence occupies residues 1-20 (MMKVLVVVALLVTLISYSSS). A propeptide spanning residues 21–41 (EGIDDLEADELLSLMANEQTR) is cleaved from the precursor. 3 cysteine pairs are disulfide-bonded: Cys44–Cys59, Cys51–Cys68, and Cys70–Cys84.

This sequence belongs to the neurotoxin 19 (CSTX) family. 04 (U1-Lctx) subfamily. As to expression, expressed by the venom gland.

It is found in the secreted. The chain is U1-lycotoxin-Ls1h from Lycosa singoriensis (Wolf spider).